Here is a 93-residue protein sequence, read N- to C-terminus: Large ribosomal subunit protein eL43 (93 aa).

The segment at C39–C60 adopts a C4-type zinc-finger fold.

The protein belongs to the eukaryotic ribosomal protein eL43 family.

The polypeptide is Large ribosomal subunit protein eL43 (RPL37A) (Brassica rapa subsp. rapa (Turnip)).